Consider the following 89-residue polypeptide: Small ribosomal subunit protein uS15 (89 aa).

It belongs to the universal ribosomal protein uS15 family. In terms of assembly, part of the 30S ribosomal subunit. Forms a bridge to the 50S subunit in the 70S ribosome, contacting the 23S rRNA.

Its function is as follows. One of the primary rRNA binding proteins, it binds directly to 16S rRNA where it helps nucleate assembly of the platform of the 30S subunit by binding and bridging several RNA helices of the 16S rRNA. Functionally, forms an intersubunit bridge (bridge B4) with the 23S rRNA of the 50S subunit in the ribosome. The sequence is that of Small ribosomal subunit protein uS15 from Chlamydia pneumoniae (Chlamydophila pneumoniae).